The sequence spans 228 residues: Phosphatidylserine decarboxylase proenzyme (228 aa).

Ser-197 (schiff-base intermediate with substrate; via pyruvic acid) is an active-site residue. Ser-197 is modified (pyruvic acid (Ser); by autocatalysis).

It belongs to the phosphatidylserine decarboxylase family. PSD-A subfamily. Heterodimer of a large membrane-associated beta subunit and a small pyruvoyl-containing alpha subunit. Pyruvate is required as a cofactor. Post-translationally, is synthesized initially as an inactive proenzyme. Formation of the active enzyme involves a self-maturation process in which the active site pyruvoyl group is generated from an internal serine residue via an autocatalytic post-translational modification. Two non-identical subunits are generated from the proenzyme in this reaction, and the pyruvate is formed at the N-terminus of the alpha chain, which is derived from the carboxyl end of the proenzyme. The post-translation cleavage follows an unusual pathway, termed non-hydrolytic serinolysis, in which the side chain hydroxyl group of the serine supplies its oxygen atom to form the C-terminus of the beta chain, while the remainder of the serine residue undergoes an oxidative deamination to produce ammonia and the pyruvoyl prosthetic group on the alpha chain.

It is found in the cell membrane. It catalyses the reaction a 1,2-diacyl-sn-glycero-3-phospho-L-serine + H(+) = a 1,2-diacyl-sn-glycero-3-phosphoethanolamine + CO2. It participates in phospholipid metabolism; phosphatidylethanolamine biosynthesis; phosphatidylethanolamine from CDP-diacylglycerol: step 2/2. In terms of biological role, catalyzes the formation of phosphatidylethanolamine (PtdEtn) from phosphatidylserine (PtdSer). The protein is Phosphatidylserine decarboxylase proenzyme of Bacteroides fragilis (strain ATCC 25285 / DSM 2151 / CCUG 4856 / JCM 11019 / LMG 10263 / NCTC 9343 / Onslow / VPI 2553 / EN-2).